Reading from the N-terminus, the 484-residue chain is Cysteine--tRNA ligase (484 aa).

Residue Cys27 coordinates Zn(2+). Positions 29–39 match the 'HIGH' region motif; it reads PTTYNYIHLGN. Cys207, His232, and Glu236 together coordinate Zn(2+). Positions 264-268 match the 'KMSKS' region motif; the sequence is KMSKS. Residue Lys267 coordinates ATP.

The protein belongs to the class-I aminoacyl-tRNA synthetase family. Monomer. Zn(2+) serves as cofactor.

Its subcellular location is the cytoplasm. It carries out the reaction tRNA(Cys) + L-cysteine + ATP = L-cysteinyl-tRNA(Cys) + AMP + diphosphate. The chain is Cysteine--tRNA ligase from Pelotomaculum thermopropionicum (strain DSM 13744 / JCM 10971 / SI).